A 175-amino-acid chain; its full sequence is Shikimate kinase (175 aa).

11-16 (GAGKTT) is an ATP binding site. Mg(2+) is bound at residue threonine 15. 3 residues coordinate substrate: aspartate 33, arginine 57, and glycine 79. ATP is bound at residue arginine 118. Residue arginine 140 participates in substrate binding.

Belongs to the shikimate kinase family. Monomer. Mg(2+) serves as cofactor.

Its subcellular location is the cytoplasm. It carries out the reaction shikimate + ATP = 3-phosphoshikimate + ADP + H(+). It functions in the pathway metabolic intermediate biosynthesis; chorismate biosynthesis; chorismate from D-erythrose 4-phosphate and phosphoenolpyruvate: step 5/7. In terms of biological role, catalyzes the specific phosphorylation of the 3-hydroxyl group of shikimic acid using ATP as a cosubstrate. In Bacteroides thetaiotaomicron (strain ATCC 29148 / DSM 2079 / JCM 5827 / CCUG 10774 / NCTC 10582 / VPI-5482 / E50), this protein is Shikimate kinase.